The primary structure comprises 203 residues: ADP-ribosylation factor-like protein 6-interacting protein 1 (203 aa).

Topologically, residues 1–41 (MAEGDNRSSNLLAAETASLEEQLQGWGEVMLMADKVLRWER) are cytoplasmic. The chain crosses the membrane as a helical span at residues 42-62 (AWFPPAIMGVVSLVFLIIYYL). Residues 63–65 (DPS) are Lumenal-facing. Residues 66-86 (VLSGVSCFVMFLCLADYLVPI) form a helical membrane-spanning segment. Topologically, residues 87–133 (LAPRIFGSNKWTTEQQQRFHEICSNLVKTRRRAVGWWKRLFTLKEEK) are cytoplasmic. The helical transmembrane segment at 134-175 (PKMYFMTMIVSLAAVAWVGQQVHNLLLTYLIVTSLLLLPGLN) threads the bilayer. Residues 176–203 (QHGIISKYIGMAKREINKLLKQKEKKNE) are Lumenal-facing.

The protein belongs to the ARL6ip family. Homooligomer. Heterodimer with ARL6IP5. Interacts with ATL1, TMEM33 and ARL6.

The protein localises to the endomembrane system. It localises to the endoplasmic reticulum membrane. Its subcellular location is the endoplasmic reticulum. In terms of biological role, positively regulates SLC1A1/EAAC1-mediated glutamate transport by increasing its affinity for glutamate in a PKC activity-dependent manner. Promotes the catalytic efficiency of SLC1A1/EAAC1 probably by reducing its interaction with ARL6IP5, a negative regulator of SLC1A1/EAAC1-mediated glutamate transport. Plays a role in the formation and stabilization of endoplasmic reticulum tubules. Negatively regulates apoptosis, possibly by modulating the activity of caspase-9 (CASP9). Inhibits cleavage of CASP9-dependent substrates and downstream markers of apoptosis but not CASP9 itself. May be involved in protein transport, membrane trafficking, or cell signaling during hematopoietic maturation. The chain is ADP-ribosylation factor-like protein 6-interacting protein 1 (ARL6IP1) from Pongo abelii (Sumatran orangutan).